A 194-amino-acid chain; its full sequence is Peptidyl-tRNA hydrolase (194 aa).

Y17 serves as a coordination point for tRNA. H22 (proton acceptor) is an active-site residue. F68, N70, and N116 together coordinate tRNA.

The protein belongs to the PTH family. As to quaternary structure, monomer.

Its subcellular location is the cytoplasm. The enzyme catalyses an N-acyl-L-alpha-aminoacyl-tRNA + H2O = an N-acyl-L-amino acid + a tRNA + H(+). Hydrolyzes ribosome-free peptidyl-tRNAs (with 1 or more amino acids incorporated), which drop off the ribosome during protein synthesis, or as a result of ribosome stalling. Its function is as follows. Catalyzes the release of premature peptidyl moieties from peptidyl-tRNA molecules trapped in stalled 50S ribosomal subunits, and thus maintains levels of free tRNAs and 50S ribosomes. The chain is Peptidyl-tRNA hydrolase from Histophilus somni (strain 129Pt) (Haemophilus somnus).